Consider the following 374-residue polypeptide: Queuine tRNA-ribosyltransferase (374 aa).

Catalysis depends on D89, which acts as the Proton acceptor. Residues D89–F93, D143, Q187, and G214 contribute to the substrate site. The RNA binding stretch occupies residues G245–D251. D264 acts as the Nucleophile in catalysis. Positions T269–R273 are RNA binding; important for wobble base 34 recognition. Zn(2+) is bound by residues C302, C304, C307, and H333.

The protein belongs to the queuine tRNA-ribosyltransferase family. In terms of assembly, homodimer. Within each dimer, one monomer is responsible for RNA recognition and catalysis, while the other monomer binds to the replacement base PreQ1. The cofactor is Zn(2+).

The catalysed reaction is 7-aminomethyl-7-carbaguanine + guanosine(34) in tRNA = 7-aminomethyl-7-carbaguanosine(34) in tRNA + guanine. It participates in tRNA modification; tRNA-queuosine biosynthesis. Functionally, catalyzes the base-exchange of a guanine (G) residue with the queuine precursor 7-aminomethyl-7-deazaguanine (PreQ1) at position 34 (anticodon wobble position) in tRNAs with GU(N) anticodons (tRNA-Asp, -Asn, -His and -Tyr). Catalysis occurs through a double-displacement mechanism. The nucleophile active site attacks the C1' of nucleotide 34 to detach the guanine base from the RNA, forming a covalent enzyme-RNA intermediate. The proton acceptor active site deprotonates the incoming PreQ1, allowing a nucleophilic attack on the C1' of the ribose to form the product. After dissociation, two additional enzymatic reactions on the tRNA convert PreQ1 to queuine (Q), resulting in the hypermodified nucleoside queuosine (7-(((4,5-cis-dihydroxy-2-cyclopenten-1-yl)amino)methyl)-7-deazaguanosine). The chain is Queuine tRNA-ribosyltransferase from Shewanella sp. (strain W3-18-1).